Consider the following 300-residue polypeptide: Tyrosine recombinase XerC (300 aa).

The 87-residue stretch at 4–90 (VALSLDVSRF…ALRSFFDWLV (87 aa)) folds into the Core-binding (CB) domain. One can recognise a Tyr recombinase domain in the interval 111-290 (HLPKNIDVDD…DFQHLASVYD (180 aa)). Residues arginine 150, lysine 174, histidine 242, arginine 245, and histidine 268 contribute to the active site. The O-(3'-phospho-DNA)-tyrosine intermediate role is filled by tyrosine 277.

The protein belongs to the 'phage' integrase family. XerC subfamily. Forms a cyclic heterotetrameric complex composed of two molecules of XerC and two molecules of XerD, in which XerC interacts with XerD via its C-terminal region, XerD interacts with XerC via its C-terminal region and so on.

The protein localises to the cytoplasm. With respect to regulation, ftsK may regulate the catalytic switch between XerC and XerD in the heterotetrameric complex during the two steps of the recombination process. Site-specific tyrosine recombinase, which acts by catalyzing the cutting and rejoining of the recombining DNA molecules. Binds cooperatively to specific DNA consensus sequences that are separated from XerD binding sites by a short central region, forming the heterotetrameric XerC-XerD complex that recombines DNA substrates. The complex is essential to convert dimers of the bacterial chromosome into monomers to permit their segregation at cell division. It also contributes to the segregational stability of plasmids. In the complex XerC specifically exchanges the top DNA strands. In Salmonella typhi, this protein is Tyrosine recombinase XerC.